A 271-amino-acid polypeptide reads, in one-letter code: Pyrroline-5-carboxylate reductase (271 aa).

This sequence belongs to the pyrroline-5-carboxylate reductase family.

The protein resides in the cytoplasm. It carries out the reaction L-proline + NADP(+) = (S)-1-pyrroline-5-carboxylate + NADPH + 2 H(+). The enzyme catalyses L-proline + NAD(+) = (S)-1-pyrroline-5-carboxylate + NADH + 2 H(+). It functions in the pathway amino-acid biosynthesis; L-proline biosynthesis; L-proline from L-glutamate 5-semialdehyde: step 1/1. In terms of biological role, catalyzes the reduction of 1-pyrroline-5-carboxylate (PCA) to L-proline. The polypeptide is Pyrroline-5-carboxylate reductase (Staphylococcus aureus (strain COL)).